The chain runs to 261 residues: Cytochrome c oxidase subunit 3 (261 aa).

Residues 1 to 15 lie on the Mitochondrial matrix side of the membrane; the sequence is MTHQTHAYHMVNPSP. A helical membrane pass occupies residues 16 to 34; the sequence is WPLTGALSALLMTSGLIMW. At 35–40 the chain is on the mitochondrial intermembrane side; the sequence is FHYNSM. The chain crosses the membrane as a helical span at residues 41–66; the sequence is SLLTLGFTTNLLTMYQWWRDVIREGT. The Mitochondrial matrix segment spans residues 67-72; sequence FQGHHT. The helical transmembrane segment at 73–105 threads the bilayer; the sequence is PIVQKGLRYGMVLFIVSEVFFFAGFFWAFYHSS. Over 106–128 the chain is Mitochondrial intermembrane; sequence LAPTPELGGCWPPTGIIPLNPLE. A helical transmembrane segment spans residues 129–152; sequence VPLLNTSVLLASGVSITWAHHSLM. Over 153–155 the chain is Mitochondrial matrix; it reads EGN. A helical transmembrane segment spans residues 156 to 183; that stretch reads RKHMLQALFITISLGVYFTLLQASEYYE. Over 184–190 the chain is Mitochondrial intermembrane; sequence TSFTISD. Residues 191 to 223 form a helical membrane-spanning segment; sequence GVYGSTFFMATGFHGLHVIIGSTFLIVCFLRQL. Residues 224–232 lie on the Mitochondrial matrix side of the membrane; that stretch reads YYHFTSNHH. A helical transmembrane segment spans residues 233–256; it reads FGFEAAAWYWHFVDVVWLFLYVSI. Residues 257-261 lie on the Mitochondrial intermembrane side of the membrane; it reads YWWGS.

It belongs to the cytochrome c oxidase subunit 3 family. In terms of assembly, component of the cytochrome c oxidase (complex IV, CIV), a multisubunit enzyme composed of 14 subunits. The complex is composed of a catalytic core of 3 subunits MT-CO1, MT-CO2 and MT-CO3, encoded in the mitochondrial DNA, and 11 supernumerary subunits COX4I, COX5A, COX5B, COX6A, COX6B, COX6C, COX7A, COX7B, COX7C, COX8 and NDUFA4, which are encoded in the nuclear genome. The complex exists as a monomer or a dimer and forms supercomplexes (SCs) in the inner mitochondrial membrane with NADH-ubiquinone oxidoreductase (complex I, CI) and ubiquinol-cytochrome c oxidoreductase (cytochrome b-c1 complex, complex III, CIII), resulting in different assemblies (supercomplex SCI(1)III(2)IV(1) and megacomplex MCI(2)III(2)IV(2)).

Its subcellular location is the mitochondrion inner membrane. The catalysed reaction is 4 Fe(II)-[cytochrome c] + O2 + 8 H(+)(in) = 4 Fe(III)-[cytochrome c] + 2 H2O + 4 H(+)(out). In terms of biological role, component of the cytochrome c oxidase, the last enzyme in the mitochondrial electron transport chain which drives oxidative phosphorylation. The respiratory chain contains 3 multisubunit complexes succinate dehydrogenase (complex II, CII), ubiquinol-cytochrome c oxidoreductase (cytochrome b-c1 complex, complex III, CIII) and cytochrome c oxidase (complex IV, CIV), that cooperate to transfer electrons derived from NADH and succinate to molecular oxygen, creating an electrochemical gradient over the inner membrane that drives transmembrane transport and the ATP synthase. Cytochrome c oxidase is the component of the respiratory chain that catalyzes the reduction of oxygen to water. Electrons originating from reduced cytochrome c in the intermembrane space (IMS) are transferred via the dinuclear copper A center (CU(A)) of subunit 2 and heme A of subunit 1 to the active site in subunit 1, a binuclear center (BNC) formed by heme A3 and copper B (CU(B)). The BNC reduces molecular oxygen to 2 water molecules using 4 electrons from cytochrome c in the IMS and 4 protons from the mitochondrial matrix. This Canis lupus (Gray wolf) protein is Cytochrome c oxidase subunit 3 (MT-CO3).